The primary structure comprises 920 residues: Phosphoenolpyruvate carboxylase (920 aa).

Active-site residues include His138 and Lys583.

Belongs to the PEPCase type 1 family. It depends on Mg(2+) as a cofactor.

The catalysed reaction is oxaloacetate + phosphate = phosphoenolpyruvate + hydrogencarbonate. In terms of biological role, forms oxaloacetate, a four-carbon dicarboxylic acid source for the tricarboxylic acid cycle. In Streptococcus pyogenes serotype M5 (strain Manfredo), this protein is Phosphoenolpyruvate carboxylase.